The primary structure comprises 133 residues: Fatty acid-binding protein homolog 1 (133 aa).

Met1 is subject to N-acetylmethionine. Hexadecanoate-binding positions include Arg107 and 127–129 (RTY).

This sequence belongs to the calycin superfamily. Fatty-acid binding protein (FABP) family.

Has been implicated in the acquisition, storage, and transport of lipids, and may be important to the organism since it is incapable of synthesizing most of its lipids de novo. The sequence is that of Fatty acid-binding protein homolog 1 (FABP1) from Echinococcus granulosus (Hydatid tapeworm).